Consider the following 387-residue polypeptide: F-box protein At5g41490 (387 aa).

An F-box domain is found at 2–47 (ATMITNLRRDLIEEIISRVPLRSMKAVRLTCKSWNNISKSEIFTKM).

The sequence is that of F-box protein At5g41490 from Arabidopsis thaliana (Mouse-ear cress).